We begin with the raw amino-acid sequence, 140 residues long: Large-conductance mechanosensitive channel (140 aa).

A run of 2 helical transmembrane segments spans residues 16–36 (VIDL…VTAL) and 84–104 (INTV…VKLI).

Belongs to the MscL family. Homopentamer.

Its subcellular location is the cell inner membrane. Functionally, channel that opens in response to stretch forces in the membrane lipid bilayer. May participate in the regulation of osmotic pressure changes within the cell. The protein is Large-conductance mechanosensitive channel of Xanthomonas oryzae pv. oryzae (strain MAFF 311018).